We begin with the raw amino-acid sequence, 238 residues long: LexA repressor (238 aa).

The H-T-H motif DNA-binding region spans Phe-26–Thr-46. Residues Ser-158 and Lys-196 each act as for autocatalytic cleavage activity in the active site.

Belongs to the peptidase S24 family. In terms of assembly, homodimer.

It catalyses the reaction Hydrolysis of Ala-|-Gly bond in repressor LexA.. In terms of biological role, represses a number of genes involved in the response to DNA damage (SOS response), including recA and lexA. In the presence of single-stranded DNA, RecA interacts with LexA causing an autocatalytic cleavage which disrupts the DNA-binding part of LexA, leading to derepression of the SOS regulon and eventually DNA repair. The chain is LexA repressor from Rhizobium meliloti (strain 1021) (Ensifer meliloti).